Reading from the N-terminus, the 92-residue chain is WAP four-disulfide core domain protein 12 (92 aa).

An N-terminal signal peptide occupies residues 1–23; the sequence is MGSSRFLVLMVSLALVTLVAAEG. Residues 27–74 form the WAP domain; the sequence is NIEKPEVCPADNVRCIKSDPPQCHTDQDCQGIRKCCYLHCGFKCVIPV. 4 disulfides stabilise this stretch: Cys34–Cys62, Cys41–Cys66, Cys49–Cys61, and Cys55–Cys70.

The protein resides in the secreted. Antibacterial protein. Putative acid-stable proteinase inhibitor. This Aotus nancymaae (Ma's night monkey) protein is WAP four-disulfide core domain protein 12 (WFDC12).